Consider the following 109-residue polypeptide: Phosphocarrier protein HPr (109 aa).

The region spanning 22-109 (ELSAVFTIRN…EVFNSGFGEL (88 aa)) is the HPr domain. Histidine 36 serves as the catalytic Pros-phosphohistidine intermediate.

It belongs to the HPr family.

It localises to the cytoplasm. General (non sugar-specific) component of the phosphoenolpyruvate-dependent sugar phosphotransferase system (sugar PTS). This major carbohydrate active-transport system catalyzes the phosphorylation of incoming sugar substrates concomitantly with their translocation across the cell membrane. The phosphoryl group from phosphoenolpyruvate (PEP) is transferred to the phosphoryl carrier protein HPr by enzyme I. Phospho-HPr then transfers it to the PTS EIIA domain. This Chlamydia trachomatis serovar D (strain ATCC VR-885 / DSM 19411 / UW-3/Cx) protein is Phosphocarrier protein HPr (ptsH).